Consider the following 285-residue polypeptide: Polyamine aminopropyltransferase (285 aa).

The region spanning 5-241 (DNWYIEHFQP…GWWSVTMASK (237 aa)) is the PABS domain. S-methyl-5'-thioadenosine is bound at residue Q35. The spermidine site is built by H66 and D90. Residues D110 and 141–142 (DG) contribute to the S-methyl-5'-thioadenosine site. D160 serves as the catalytic Proton acceptor. 160-163 (DSTD) is a spermidine binding site. Position 167 (P167) interacts with S-methyl-5'-thioadenosine.

Belongs to the spermidine/spermine synthase family. In terms of assembly, homodimer or homotetramer.

It is found in the cytoplasm. The enzyme catalyses S-adenosyl 3-(methylsulfanyl)propylamine + putrescine = S-methyl-5'-thioadenosine + spermidine + H(+). The protein operates within amine and polyamine biosynthesis; spermidine biosynthesis; spermidine from putrescine: step 1/1. Catalyzes the irreversible transfer of a propylamine group from the amino donor S-adenosylmethioninamine (decarboxy-AdoMet) to putrescine (1,4-diaminobutane) to yield spermidine. This chain is Polyamine aminopropyltransferase, found in Xanthomonas oryzae pv. oryzae (strain MAFF 311018).